The chain runs to 215 residues: Probable phosphoglycerate mutase GpmB (215 aa).

Residues 8–15 (RHGESEWN), 21–22 (QG), Arg58, Arg60, 82–85 (ELHM), and 151–152 (GI) each bind substrate. Catalysis depends on His9, which acts as the Tele-phosphohistidine intermediate. The Proton donor/acceptor role is filled by Glu82.

This sequence belongs to the phosphoglycerate mutase family. GpmB subfamily.

It catalyses the reaction (2R)-2-phosphoglycerate = (2R)-3-phosphoglycerate. It participates in carbohydrate degradation; glycolysis; pyruvate from D-glyceraldehyde 3-phosphate: step 3/5. In Photorhabdus laumondii subsp. laumondii (strain DSM 15139 / CIP 105565 / TT01) (Photorhabdus luminescens subsp. laumondii), this protein is Probable phosphoglycerate mutase GpmB.